A 105-amino-acid chain; its full sequence is Urease subunit beta (105 aa).

This sequence belongs to the urease beta subunit family. In terms of assembly, heterotrimer of UreA (gamma), UreB (beta) and UreC (alpha) subunits. Three heterotrimers associate to form the active enzyme.

Its subcellular location is the cytoplasm. The enzyme catalyses urea + 2 H2O + H(+) = hydrogencarbonate + 2 NH4(+). The protein operates within nitrogen metabolism; urea degradation; CO(2) and NH(3) from urea (urease route): step 1/1. This is Urease subunit beta from Pseudomonas putida (strain ATCC 47054 / DSM 6125 / CFBP 8728 / NCIMB 11950 / KT2440).